A 4318-amino-acid chain; its full sequence is Cytoplasmic dynein 2 heavy chain 1 (4318 aa).

The tract at residues 1-1658 (MPAEDARKEY…IMRMVDAEFQ (1658 aa)) is stem. 147-154 (LKSLVRKQ) is a binding site for ATP. Coiled coils occupy residues 1328–1354 (DKAT…QRKW) and 1402–1431 (LRTT…RSIL). AAA regions lie at residues 1659–1883 (YTYE…VLRG), 1951–2171 (DAIR…RQGD), 2261–2515 (ASDF…WVLG), and 2623–2871 (TFAR…SSSV). 1697 to 1704 (GPAGTGKT) is an ATP binding site. Residues 1959–1986 (EHNLVVMETQVKKALELYEQLRQRMGVV) are a coiled coil. ATP is bound by residues 1989–1996 (GPSGSGKS), 2301–2308 (GPDGCGKG), and 2661–2668 (GRSGVGRR). The segment at 2888–3176 (DVYRRKKQGV…YELEKEQETI (289 aa)) is stalk. Coiled coils occupy residues 2908-2989 (VAKL…AEIE) and 3423-3480 (QHEK…KTKE). 2 AAA regions span residues 3251–3487 (LSTE…TITQ) and 3699–3914 (MTFF…IIDR).

Belongs to the dynein heavy chain family. As to quaternary structure, the cytoplasmic dynein complex 2 is probably composed by a heavy chain DYH1B homodimer and a number of light intermediate chains.

It is found in the cytoplasm. It localises to the cytoskeleton. The protein resides in the cilium axoneme. Its subcellular location is the cell membrane. In terms of biological role, may function as a motor for intraflagellar retrograde transport. Functions in cilia biogenesis. The protein is Cytoplasmic dynein 2 heavy chain 1 (DYH1B) of Tripneustes gratilla (Hawaian sea urchin).